We begin with the raw amino-acid sequence, 218 residues long: Pyridoxine/pyridoxamine 5'-phosphate oxidase (218 aa).

Substrate is bound by residues 14–17 (RREY) and lysine 72. Residues 67 to 72 (RIVLLK), 82 to 83 (YT), arginine 88, lysine 89, and glutamine 111 contribute to the FMN site. Substrate-binding residues include tyrosine 129, arginine 133, and serine 137. FMN is bound by residues 146-147 (QS) and tryptophan 191. 197–199 (RLH) is a binding site for substrate. Arginine 201 is an FMN binding site.

This sequence belongs to the pyridoxamine 5'-phosphate oxidase family. In terms of assembly, homodimer. It depends on FMN as a cofactor.

It catalyses the reaction pyridoxamine 5'-phosphate + O2 + H2O = pyridoxal 5'-phosphate + H2O2 + NH4(+). The catalysed reaction is pyridoxine 5'-phosphate + O2 = pyridoxal 5'-phosphate + H2O2. It functions in the pathway cofactor metabolism; pyridoxal 5'-phosphate salvage; pyridoxal 5'-phosphate from pyridoxamine 5'-phosphate: step 1/1. Its pathway is cofactor metabolism; pyridoxal 5'-phosphate salvage; pyridoxal 5'-phosphate from pyridoxine 5'-phosphate: step 1/1. Its function is as follows. Catalyzes the oxidation of either pyridoxine 5'-phosphate (PNP) or pyridoxamine 5'-phosphate (PMP) into pyridoxal 5'-phosphate (PLP). This Cronobacter sakazakii (strain ATCC BAA-894) (Enterobacter sakazakii) protein is Pyridoxine/pyridoxamine 5'-phosphate oxidase.